We begin with the raw amino-acid sequence, 226 residues long: 2-C-methyl-D-erythritol 4-phosphate cytidylyltransferase (226 aa).

This sequence belongs to the IspD/TarI cytidylyltransferase family. IspD subfamily.

The catalysed reaction is 2-C-methyl-D-erythritol 4-phosphate + CTP + H(+) = 4-CDP-2-C-methyl-D-erythritol + diphosphate. The protein operates within isoprenoid biosynthesis; isopentenyl diphosphate biosynthesis via DXP pathway; isopentenyl diphosphate from 1-deoxy-D-xylulose 5-phosphate: step 2/6. Catalyzes the formation of 4-diphosphocytidyl-2-C-methyl-D-erythritol from CTP and 2-C-methyl-D-erythritol 4-phosphate (MEP). The protein is 2-C-methyl-D-erythritol 4-phosphate cytidylyltransferase of Thermosipho africanus (strain TCF52B).